A 399-amino-acid polypeptide reads, in one-letter code: Putative endoplasmin-like protein (399 aa).

Residue Lys-130 forms a Glycyl lysine isopeptide (Lys-Gly) (interchain with G-Cter in SUMO2) linkage. Residues 350 to 399 (LDLAVVEEPDEEPEETAEDKEQDKDKEMDVGTDEEKQETAKESTAEKDEL) are disordered. Positions 354–367 (VVEEPDEEPEETAE) are enriched in acidic residues. Basic and acidic residues predominate over residues 368–399 (DKEQDKDKEMDVGTDEEKQETAKESTAEKDEL).

This sequence belongs to the heat shock protein 90 family.

In terms of biological role, putative molecular chaperone. This chain is Putative endoplasmin-like protein (HSP90B2P), found in Homo sapiens (Human).